The following is an 805-amino-acid chain: Transitional endoplasmic reticulum ATPase (805 aa).

S3 is modified (phosphoserine). ATP is bound by residues 247 to 253, N348, H384, and 521 to 526; these read PGTGKTL and GCGKTL. The disordered stretch occupies residues 768-805; that stretch reads FGSFRFPAGGQGGAGPSQGAGGGSGGSHFNEEEDDLYG. The span at 776–793 shows a compositional bias: gly residues; sequence GGQGGAGPSQGAGGGSGG.

Belongs to the AAA ATPase family. As to quaternary structure, homohexamer. Forms a ring-shaped particle of 12.5 nm diameter, that displays 6-fold radial symmetry. Interacts with the FACT/DUF complex, which includes subunits ssrp1/duf87 and supt16h/duf140. In terms of processing, phosphorylated.

The protein resides in the cytoplasm. It localises to the cytosol. The protein localises to the endoplasmic reticulum. Its subcellular location is the nucleus. It is found in the stress granule. The enzyme catalyses ATP + H2O = ADP + phosphate + H(+). With respect to regulation, ATPase activity is inhibited or reduced by lowering pH from 9.0 to 7.0, and by addition of Ca(2+), EDTA, KNO(3) or by treatment with N-ethylmaleimide (NEM). In terms of biological role, necessary for the fragmentation of Golgi stacks during mitosis and for their reassembly after mitosis. Involved in the formation of the nuclear envelope, and of the transitional endoplasmic reticulum (tER). The transfer of membranes from the endoplasmic reticulum to the Golgi apparatus occurs via 50-70 nm transition vesicles which derive from part-rough, part-smooth transitional elements of the endoplasmic reticulum (tER). Vesicle budding from the tER is an ATP-dependent process. Involved in endoplasmic reticulum stress-induced pre-emptive quality control, a mechanism that selectively attenuates the translocation of newly synthesized proteins into the endoplasmic reticulum and reroutes them to the cytosol for proteasomal degradation. Involved in clearance process by mediating G3BP1 extraction from stress granules. Also involved in DNA damage response: recruited to double-strand breaks (DSBs) sites and promotes the recruitment of tp53bp1 at DNA damage sites. Together with sprtn metalloprotease, involved in the repair of covalent DNA-protein cross-links (DPCs) during DNA synthesis. Involved in interstrand cross-link repair in response to replication stress by mediating unloading of the ubiquitinated CMG helicase complex. Enhances cell cycle progression and inhibits apoptosis at low temperatures. Essential for the maturation of ubiquitin-containing autophagosomes and the clearance of ubiquitinated protein by autophagy. Acts as a negative regulator of type I interferon production by promoting ubiquitination of rigi. May play a role in the ubiquitin-dependent sorting of membrane proteins to lysosomes where they undergo degradation. May more particularly play a role in caveolins sorting in cells. By controlling the steady-state expression of the IGF1R receptor, indirectly regulates the insulin-like growth factor receptor signaling pathway. This Xenopus tropicalis (Western clawed frog) protein is Transitional endoplasmic reticulum ATPase.